The chain runs to 295 residues: MNKRRNLLNISDLTVDDVENITKLANQYLKKEVANSHILENKTVINLFFEDSTRTLASFEIAAKSLGANVVTLPIRSSSINKGEDLKDMIKTLNAMNPDYIIIRHKSSGIINTLAKYVNCSLINAGDGSSEHPTQALADYLVISNHKKQIKDLKVVICGDILHSRVARSNIRLLKMFGAEINLVAPPTLICKHFPEVDSVHYSLIEGIKDADVIMLLRLQKERMNNSSSEKEYFYLYGLDSQKLSYAKPDAIVMHPGPINRGIEISSDVADCVILQQVEFGLAIRKAVLHYYRPC.

Residues Arg-54 and Thr-55 each coordinate carbamoyl phosphate. Position 82 (Lys-82) interacts with L-aspartate. Carbamoyl phosphate-binding residues include Arg-104, His-132, and Gln-135. L-aspartate is bound by residues Arg-165 and Arg-218. The carbamoyl phosphate site is built by Gly-257 and Pro-258.

Belongs to the aspartate/ornithine carbamoyltransferase superfamily. ATCase family. As to quaternary structure, heterododecamer (2C3:3R2) of six catalytic PyrB chains organized as two trimers (C3), and six regulatory PyrI chains organized as three dimers (R2).

It catalyses the reaction carbamoyl phosphate + L-aspartate = N-carbamoyl-L-aspartate + phosphate + H(+). Its pathway is pyrimidine metabolism; UMP biosynthesis via de novo pathway; (S)-dihydroorotate from bicarbonate: step 2/3. In terms of biological role, catalyzes the condensation of carbamoyl phosphate and aspartate to form carbamoyl aspartate and inorganic phosphate, the committed step in the de novo pyrimidine nucleotide biosynthesis pathway. The polypeptide is Aspartate carbamoyltransferase catalytic subunit (Wolbachia pipientis wMel).